We begin with the raw amino-acid sequence, 85 residues long: Small ribosomal subunit protein bS16 (85 aa).

The protein belongs to the bacterial ribosomal protein bS16 family.

The protein is Small ribosomal subunit protein bS16 of Pseudomonas syringae pv. tomato (strain ATCC BAA-871 / DC3000).